We begin with the raw amino-acid sequence, 230 residues long: Ureidoacrylate amidohydrolase RutB (230 aa).

Residue aspartate 24 is the Proton acceptor of the active site. Lysine 133 is an active-site residue. Cysteine 166 (nucleophile) is an active-site residue.

It belongs to the isochorismatase family. RutB subfamily.

The catalysed reaction is (Z)-3-ureidoacrylate + H2O + H(+) = (Z)-3-aminoacrylate + NH4(+) + CO2. The enzyme catalyses (Z)-3-ureidoacrylate + H2O = (Z)-3-aminoacrylate + carbamate + H(+). It catalyses the reaction (Z)-2-methylureidoacrylate + H2O + H(+) = (Z)-2-methylaminoacrylate + NH4(+) + CO2. Functionally, hydrolyzes ureidoacrylate to form aminoacrylate and carbamate. The carbamate hydrolyzes spontaneously, thereby releasing one of the nitrogen atoms of the pyrimidine ring as ammonia and one of its carbon atoms as CO2. In Escherichia coli O127:H6 (strain E2348/69 / EPEC), this protein is Ureidoacrylate amidohydrolase RutB.